A 166-amino-acid polypeptide reads, in one-letter code: CDP-archaeol synthase (166 aa).

Helical transmembrane passes span 7–27, 55–75, 78–98, 116–136, and 138–158; these read LLLSILIYLPAFIANGSGPFI, LIVALTFGTTVGVIISKFFTA, TLISFLESLFAMIGDMIGAFI, LDFVLGASLILVLMRVNITWY, and FLFICGLAFFLHQGTNYVAYL.

This sequence belongs to the CDP-archaeol synthase family. It depends on Mg(2+) as a cofactor.

It is found in the cell membrane. It carries out the reaction 2,3-bis-O-(geranylgeranyl)-sn-glycerol 1-phosphate + CTP + H(+) = CDP-2,3-bis-O-(geranylgeranyl)-sn-glycerol + diphosphate. The protein operates within membrane lipid metabolism; glycerophospholipid metabolism. Its function is as follows. Catalyzes the formation of CDP-2,3-bis-(O-geranylgeranyl)-sn-glycerol (CDP-archaeol) from 2,3-bis-(O-geranylgeranyl)-sn-glycerol 1-phosphate (DGGGP) and CTP. This reaction is the third ether-bond-formation step in the biosynthesis of archaeal membrane lipids. The sequence is that of CDP-archaeol synthase from Saccharolobus islandicus (strain Y.N.15.51 / Yellowstone #2) (Sulfolobus islandicus).